We begin with the raw amino-acid sequence, 559 residues long: Proline--tRNA ligase (559 aa).

The protein belongs to the class-II aminoacyl-tRNA synthetase family. ProS type 1 subfamily. In terms of assembly, homodimer.

The protein resides in the cytoplasm. The catalysed reaction is tRNA(Pro) + L-proline + ATP = L-prolyl-tRNA(Pro) + AMP + diphosphate. Functionally, catalyzes the attachment of proline to tRNA(Pro) in a two-step reaction: proline is first activated by ATP to form Pro-AMP and then transferred to the acceptor end of tRNA(Pro). As ProRS can inadvertently accommodate and process non-cognate amino acids such as alanine and cysteine, to avoid such errors it has two additional distinct editing activities against alanine. One activity is designated as 'pretransfer' editing and involves the tRNA(Pro)-independent hydrolysis of activated Ala-AMP. The other activity is designated 'posttransfer' editing and involves deacylation of mischarged Ala-tRNA(Pro). The misacylated Cys-tRNA(Pro) is not edited by ProRS. This Ruthia magnifica subsp. Calyptogena magnifica protein is Proline--tRNA ligase.